The chain runs to 300 residues: 4-hydroxy-tetrahydrodipicolinate synthase (300 aa).

Thr57 contacts pyruvate. Residue Tyr145 is the Proton donor/acceptor of the active site. Residue Lys173 is the Schiff-base intermediate with substrate of the active site. Ile213 provides a ligand contact to pyruvate.

The protein belongs to the DapA family. As to quaternary structure, homotetramer; dimer of dimers.

The protein localises to the cytoplasm. The enzyme catalyses L-aspartate 4-semialdehyde + pyruvate = (2S,4S)-4-hydroxy-2,3,4,5-tetrahydrodipicolinate + H2O + H(+). The protein operates within amino-acid biosynthesis; L-lysine biosynthesis via DAP pathway; (S)-tetrahydrodipicolinate from L-aspartate: step 3/4. In terms of biological role, catalyzes the condensation of (S)-aspartate-beta-semialdehyde [(S)-ASA] and pyruvate to 4-hydroxy-tetrahydrodipicolinate (HTPA). The protein is 4-hydroxy-tetrahydrodipicolinate synthase of Corynebacterium urealyticum (strain ATCC 43042 / DSM 7109).